Reading from the N-terminus, the 463-residue chain is L-seryl-tRNA(Sec) selenium transferase (463 aa).

Residue lysine 295 is modified to N6-(pyridoxal phosphate)lysine.

It belongs to the SelA family. As to quaternary structure, homodecamer; pentamer of dimers. Binds only one seryl-tRNA(Sec) per dimer. Pyridoxal 5'-phosphate is required as a cofactor.

Its subcellular location is the cytoplasm. The enzyme catalyses L-seryl-tRNA(Sec) + selenophosphate + H(+) = L-selenocysteinyl-tRNA(Sec) + phosphate. Its pathway is aminoacyl-tRNA biosynthesis; selenocysteinyl-tRNA(Sec) biosynthesis; selenocysteinyl-tRNA(Sec) from L-seryl-tRNA(Sec) (bacterial route): step 1/1. In terms of biological role, converts seryl-tRNA(Sec) to selenocysteinyl-tRNA(Sec) required for selenoprotein biosynthesis. The sequence is that of L-seryl-tRNA(Sec) selenium transferase from Shigella flexneri serotype 5b (strain 8401).